A 195-amino-acid chain; its full sequence is E3 ubiquitin-protein ligase ZNRF1 (195 aa).

Residues 1–10 (MGGKQSSASR) are compositionally biased toward polar residues. Residues 1 to 37 (MGGKQSSASRSRAPFPGVSSDDSAVPPSSNFGHFRGG) form a disordered region. Residue glycine 2 is the site of N-myristoyl glycine attachment. Residues 18–29 (VSSDDSAVPPSS) are compositionally biased toward low complexity. The RING-type; atypical zinc-finger motif lies at 152–193 (CVICLEELSQGDTIARLPCLCIYHKSCIDSWFEVNRCCPEHP).

It localises to the endosome. The protein localises to the lysosome. Its subcellular location is the membrane. The enzyme catalyses S-ubiquitinyl-[E2 ubiquitin-conjugating enzyme]-L-cysteine + [acceptor protein]-L-lysine = [E2 ubiquitin-conjugating enzyme]-L-cysteine + N(6)-ubiquitinyl-[acceptor protein]-L-lysine.. Its pathway is protein modification; protein ubiquitination. E3 ubiquitin-protein ligase that plays a role in neuron cells differentiation. Plays a role in the establishment and maintenance of neuronal transmission and plasticity. The polypeptide is E3 ubiquitin-protein ligase ZNRF1 (znrf1) (Xenopus laevis (African clawed frog)).